The sequence spans 230 residues: Peptidyl-prolyl cis-trans isomerase Mip (230 aa).

An N-terminal signal peptide occupies residues 1–21 (MKRLILPFLSVGLLLGTTAHA). One can recognise a PPIase FKBP-type domain in the interval 142 to 230 (NDEVTVNYEG…KVNLISVKKK (89 aa)).

It belongs to the FKBP-type PPIase family.

The protein resides in the secreted. The enzyme catalyses [protein]-peptidylproline (omega=180) = [protein]-peptidylproline (omega=0). May be an essential virulence factor associated with macrophage infectivity. Exhibits PPIase activity. This chain is Peptidyl-prolyl cis-trans isomerase Mip (mip), found in Coxiella burnetii (strain RSA 493 / Nine Mile phase I).